The chain runs to 77 residues: Large ribosomal subunit protein uL24c (77 aa).

The protein belongs to the universal ribosomal protein uL24 family. As to quaternary structure, part of the 50S ribosomal subunit.

It localises to the plastid. The protein resides in the chloroplast. Its function is as follows. One of two assembly initiator proteins, it binds directly to the 5'-end of the 23S rRNA, where it nucleates assembly of the 50S subunit. This chain is Large ribosomal subunit protein uL24c (rpl24), found in Trieres chinensis (Marine centric diatom).